The primary structure comprises 501 residues: 2,3-bisphosphoglycerate-independent phosphoglycerate mutase (501 aa).

Residues D12 and S62 each contribute to the Mn(2+) site. The active-site Phosphoserine intermediate is the S62. Residues H121, 150-151, R182, R188, 253-256, and K323 each bind substrate; these read RD and RSDR. Positions 390, 394, 431, 432, and 450 each coordinate Mn(2+).

It belongs to the BPG-independent phosphoglycerate mutase family. As to quaternary structure, monomer. Mn(2+) serves as cofactor.

The enzyme catalyses (2R)-2-phosphoglycerate = (2R)-3-phosphoglycerate. The protein operates within carbohydrate degradation; glycolysis; pyruvate from D-glyceraldehyde 3-phosphate: step 3/5. In terms of biological role, catalyzes the interconversion of 2-phosphoglycerate and 3-phosphoglycerate. The protein is 2,3-bisphosphoglycerate-independent phosphoglycerate mutase of Ehrlichia canis (strain Jake).